Consider the following 896-residue polypeptide: Zinc finger protein 574 (896 aa).

2 consecutive C2H2-type zinc fingers follow at residues 16–38 and 76–98; these read YVCS…QNSH and YQCL…QELH. Ser-113 bears the Phosphoserine mark. A C2H2-type 3 zinc finger spans residues 126–148; it reads YECVDCKALFASQELWLNHRQTH. Ser-164 is modified (phosphoserine). A C2H2-type 4 zinc finger spans residues 214-236; sequence YKCSECSQLFQLPADFLEHQATH. A disordered region spans residues 239-301; it reads APVPESQEPA…RARRNNSGEA (63 aa). A compositionally biased stretch (polar residues) spans 247–257; sequence PALQQEVQASS. Residues 274-287 are compositionally biased toward basic and acidic residues; that stretch reads HSYELRNGEAIGRD. Position 298 is a phosphoserine (Ser-298). 4 C2H2-type zinc fingers span residues 309 to 331, 336 to 358, 364 to 386, and 392 to 413; these read LFCS…LRSH, FKCP…LGDH, FLCV…RRAH, and HSCP…RRTH. The interval 434–460 is disordered; sequence FPEPAPAETGEPEAPEPPVSEETSAGP. The segment at 466–489 adopts a C2H2-type 9 zinc-finger fold; sequence YRCLLCSREFGKALQLTRHQRFVH. Residues 495–517 form a C2H2-type 10; degenerate zinc finger; that stretch reads HKCSICGKMFKKKSHVRNHLRTH. 4 C2H2-type zinc fingers span residues 523 to 545, 551 to 573, 579 to 601, and 607 to 630; these read FPCP…RLTH, YRCG…RLVH, YRCQ…RYHH, and YKCR…LVVH. A C2H2-type 15; degenerate zinc finger spans residues 636-659; that stretch reads HRCPSCGAAFPSSLRLREHRCAAA. The segment at 667 to 689 adopts a C2H2-type 16 zinc-finger fold; the sequence is FECGTCGKKVGSAARLQAHEAAH. The tract at residues 687 to 733 is disordered; that stretch reads AAHAAAGPGEVLAKEPPAPRAPRATRAPVASPAALGSTATASPAAPA. Residues 707-732 are compositionally biased toward low complexity; that stretch reads APRATRAPVASPAALGSTATASPAAP. At Ser-717 the chain carries Phosphoserine. Thr-724 is subject to Phosphothreonine. At Ser-728 the chain carries Phosphoserine. 4 consecutive C2H2-type zinc fingers follow at residues 738-760, 766-788, 794-816, and 822-844; these read LECS…RRIH, YPCP…RRLH, FACE…RRIH, and YSCP…RKTH. An Asymmetric dimethylarginine modification is found at Arg-832.

The protein belongs to the krueppel C2H2-type zinc-finger protein family.

Its subcellular location is the nucleus. Its function is as follows. May be involved in transcriptional regulation. In Homo sapiens (Human), this protein is Zinc finger protein 574 (ZNF574).